The following is a 251-amino-acid chain: Ubiquinone/menaquinone biosynthesis C-methyltransferase UbiE (251 aa).

Residues Thr-74, Asp-95, and 123–124 contribute to the S-adenosyl-L-methionine site; that span reads NA.

It belongs to the class I-like SAM-binding methyltransferase superfamily. MenG/UbiE family.

The catalysed reaction is a 2-demethylmenaquinol + S-adenosyl-L-methionine = a menaquinol + S-adenosyl-L-homocysteine + H(+). It carries out the reaction a 2-methoxy-6-(all-trans-polyprenyl)benzene-1,4-diol + S-adenosyl-L-methionine = a 5-methoxy-2-methyl-3-(all-trans-polyprenyl)benzene-1,4-diol + S-adenosyl-L-homocysteine + H(+). The protein operates within quinol/quinone metabolism; menaquinone biosynthesis; menaquinol from 1,4-dihydroxy-2-naphthoate: step 2/2. It functions in the pathway cofactor biosynthesis; ubiquinone biosynthesis. In terms of biological role, methyltransferase required for the conversion of demethylmenaquinol (DMKH2) to menaquinol (MKH2) and the conversion of 2-polyprenyl-6-methoxy-1,4-benzoquinol (DDMQH2) to 2-polyprenyl-3-methyl-6-methoxy-1,4-benzoquinol (DMQH2). The sequence is that of Ubiquinone/menaquinone biosynthesis C-methyltransferase UbiE from Shewanella sp. (strain ANA-3).